We begin with the raw amino-acid sequence, 89 residues long: Small ribosomal subunit protein uS15 (89 aa).

Belongs to the universal ribosomal protein uS15 family. As to quaternary structure, part of the 30S ribosomal subunit. Forms a bridge to the 50S subunit in the 70S ribosome, contacting the 23S rRNA.

One of the primary rRNA binding proteins, it binds directly to 16S rRNA where it helps nucleate assembly of the platform of the 30S subunit by binding and bridging several RNA helices of the 16S rRNA. In terms of biological role, forms an intersubunit bridge (bridge B4) with the 23S rRNA of the 50S subunit in the ribosome. This chain is Small ribosomal subunit protein uS15, found in Trichodesmium erythraeum (strain IMS101).